The following is a 245-amino-acid chain: Methyltransferase-like protein 27 (245 aa).

This Homo sapiens (Human) protein is Methyltransferase-like protein 27.